A 1881-amino-acid chain; its full sequence is Nuclear pore membrane glycoprotein 210-like (1881 aa).

The first 32 residues, M1–A32, serve as a signal peptide directing secretion. 3 N-linked (GlcNAc...) asparagine glycosylation sites follow: N80, N344, and N808. Positions F1078–G1150 constitute a BIG2 domain. A glycan (N-linked (GlcNAc...) asparagine) is linked at N1441. Residues Y1804–A1824 traverse the membrane as a helical segment.

It belongs to the NUP210 family. As to expression, expressed in testis.

It is found in the nucleus membrane. It localises to the nucleus. The protein localises to the nucleoplasm. This chain is Nuclear pore membrane glycoprotein 210-like (Nup210l), found in Mus musculus (Mouse).